The following is a 615-amino-acid chain: Proteasome-associated ATPase (615 aa).

A disordered region spans residues 1-36; the sequence is MSESERPEAGDGTDALGASPDTPLSSEDAAELEQLR. The stretch at 25–102 forms a coiled coil; sequence SSEDAAELEQ…LREEVDRLGQ (78 aa). 302–307 provides a ligand contact to ATP; the sequence is GCGKTL. Positions 614 to 615 are docks into pockets in the proteasome alpha-ring; that stretch reads YL.

Belongs to the AAA ATPase family. As to quaternary structure, homohexamer. Assembles into a hexameric ring structure that caps the 20S proteasome core. Strongly interacts with the prokaryotic ubiquitin-like protein Pup through a hydrophobic interface; the interacting region of ARC lies in its N-terminal coiled-coil domain. There is one Pup binding site per ARC hexamer ring. Upon ATP-binding, the C-terminus of ARC interacts with the alpha-rings of the proteasome core, possibly by binding to the intersubunit pockets.

It functions in the pathway protein degradation; proteasomal Pup-dependent pathway. ATPase which is responsible for recognizing, binding, unfolding and translocation of pupylated proteins into the bacterial 20S proteasome core particle. May be essential for opening the gate of the 20S proteasome via an interaction with its C-terminus, thereby allowing substrate entry and access to the site of proteolysis. Thus, the C-termini of the proteasomal ATPase may function like a 'key in a lock' to induce gate opening and therefore regulate proteolysis. This Mycolicibacterium gilvum (strain PYR-GCK) (Mycobacterium gilvum (strain PYR-GCK)) protein is Proteasome-associated ATPase.